The chain runs to 1105 residues: Ran-binding protein 6 (1105 aa).

Ala2 carries the post-translational modification N-acetylalanine. HEAT repeat units lie at residues 219-257, 361-399, 402-440, 444-483, 866-905, 908-946, and 949-987; these read FKDF…TVPK, KVVL…GCHQ, EPIL…DFAP, KKFH…DCPK, LPWF…HCSP, FKYV…FGGD, and RSLC…IGKI.

The protein belongs to the importin beta family.

Its subcellular location is the cytoplasm. The protein localises to the nucleus. May function in nuclear protein import as nuclear transport receptor. The sequence is that of Ran-binding protein 6 (Ranbp6) from Mus musculus (Mouse).